The primary structure comprises 455 residues: Vimentin (455 aa).

The head stretch occupies residues 1–87 (MASRTNTSSY…GLADAINTEF (87 aa)). The stretch at 87 to 122 (FKTNRTNEKAEMQHLNDRFASYIDKVRFLEQQNKIL) forms a coiled coil. The interval 88–122 (KTNRTNEKAEMQHLNDRFASYIDKVRFLEQQNKIL) is coil 1A. Residues 94-402 (EKAEMQHLND…KLLEGEESRI (309 aa)) enclose the IF rod domain. Residues 123 to 144 (IAELEQMRGKGSSRVGDLYQDE) form a linker 1 region. A coiled-coil region spans residues 145–236 (MRELRRQVDQ…KLHDEELAEL (92 aa)). The segment at 145–236 (MRELRRQVDQ…KLHDEELAEL (92 aa)) is coil 1B. The tract at residues 237 to 259 (QIQIQEQHVQIDMEVAKPDLTAA) is linker 12. Residues 260–398 (LKDVRQQYET…ATYRKLLEGE (139 aa)) form a coil 2 region. Residues 294-398 (ARNNEAIRLA…ATYRKLLEGE (105 aa)) are a coiled coil. The tail stretch occupies residues 399 to 455 (ESRITTPFPNLSSLTLRETMKETRPAMDSLSKKVVIKTIETRDGHIINESSQNDDLE).

This sequence belongs to the intermediate filament family. Homomer assembled from elementary dimers. In terms of processing, one of the most prominent phosphoproteins in various cells of mesenchymal origin. Phosphorylation is enhanced during cell division, at which time vimentin filaments are significantly reorganized.

It localises to the cytoplasm. The protein localises to the cytoskeleton. The protein resides in the nucleus matrix. Its function is as follows. Vimentins are class-III intermediate filaments found in various non-epithelial cells, especially mesenchymal cells. Vimentin is attached to the nucleus, endoplasmic reticulum, and mitochondria, either laterally or terminally. This Cyprinus carpio (Common carp) protein is Vimentin (vim).